A 502-amino-acid chain; its full sequence is Membrane protein insertase YidC (502 aa).

Transmembrane regions (helical) follow at residues 12–32 (FLIFTILMFLFITAYELFYIY), 286–306 (LDWGTLKIIVKPLFLFLYWIY), 312–332 (WVLSILVLTFIVRIFLFPLGY), 382–402 (LPILLQIPIFFALYKVLIITV), 409–429 (FLWIPSLADKDPYYILPVIMG), and 452–472 (ITSVAFTLLFINFPAGLVLYW).

This sequence belongs to the OXA1/ALB3/YidC family. Type 1 subfamily. As to quaternary structure, interacts with the Sec translocase complex via SecD. Specifically interacts with transmembrane segments of nascent integral membrane proteins during membrane integration.

Its subcellular location is the cell membrane. Its function is as follows. Required for the insertion and/or proper folding and/or complex formation of integral membrane proteins into the membrane. Involved in integration of membrane proteins that insert both dependently and independently of the Sec translocase complex, as well as at least some lipoproteins. Aids folding of multispanning membrane proteins. The sequence is that of Membrane protein insertase YidC from Aquifex aeolicus (strain VF5).